Here is a 525-residue protein sequence, read N- to C-terminus: MGWLFLKVLLAGVSFSGFLYPLVDFCISGKTRGQKPNFVIILADDMGWGDLGANWAETKDTANLDKMASEGMRFVDFHAAASTCSPSRASLLTGRLGLRNGVTRNFAVTSVGGLPLNETTLAEVLQQAGYVTGIIGKWHLGHHGSYHPNFRGFDYYFGIPYSHDMGCTDTPGYNHPPCPACPQGDGPSRNLQRDCYTDVALPLYENLNIVEQPVNLSSLAQKYAEKATQFIQRASTSGRPFLLYVALAHMHVPLPVTQLPAAPRGRSLYGAGLWEMDSLVGQIKDKVDHTVKENTFLWFTGDNGPWAQKCELAGSVGPFTGFWQTRQGGSPAKQTTWEGGHRVPALAYWPGRVPVNVTSTALLSVLDIFPTVVALAQASLPQGRRFDGVDVSEVLFGRSQPGHRVLFHPNSGAAGEFGALQTVRLERYKAFYITGGARACDGSTGPELQHKFPLIFNLEDDTAEAVPLERGGAEYQAVLPEVRKVLADVLQDIANDNISSADYTQDPSVTPCCNPYQIACRCQAA.

An N-terminal signal peptide occupies residues 1 to 16; the sequence is MGWLFLKVLLAGVSFS. Positions 44, 45, and 84 each coordinate Ca(2+). The active-site Nucleophile is the Cys-84. Residue Cys-84 is modified to 3-oxoalanine (Cys). An N-linked (GlcNAc...) asparagine glycan is attached at Asn-117. Residue Lys-137 participates in substrate binding. His-139 is an active-site residue. Ser-162 is a substrate binding site. A glycan (N-linked (GlcNAc...) asparagine) is linked at Asn-215. His-251 serves as a coordination point for substrate. Residues Asp-302 and Asn-303 each contribute to the Ca(2+) site. Residues Asn-356 and Asn-497 are each glycosylated (N-linked (GlcNAc...) asparagine).

Belongs to the sulfatase family. It depends on Ca(2+) as a cofactor. In terms of processing, N-glycosylated. N-glycosylated with both high mannose and complex type sugars. Post-translationally, the conversion to 3-oxoalanine (also known as C-formylglycine, FGly), of a serine or cysteine residue in prokaryotes and of a cysteine residue in eukaryotes, is critical for catalytic activity. The 63-kDa precursor undergoes proteolytic processing in two steps, yielding two fragments in the first step (apparent molecular masses of 44 and 18 kDa). In the second step, the 44-kDa fragment is processed further to the 34- and 10-kDa chains. The 10-kDa chain is a cleavage product of the 44-kDa fragment but linked to the 18-kDa chain through a disulfide bridge. As to expression, widely expressed, with very low expression in brain, lung, heart and skeletal muscle.

It is found in the lysosome. It carries out the reaction an aryl sulfate + H2O = a phenol + sulfate + H(+). The catalysed reaction is Hydrolysis of the 3-sulfate groups of the N-sulfo-D-glucosamine 3-O-sulfate units of heparin.. With respect to regulation, inhibited by phosphate. The phosphate forms a covalent bond with the active site 3-oxoalanine. Its function is as follows. Displays arylsulfatase activity at acidic pH towards artificial substrates, such as p-nitrocatechol sulfate and also, but with a lower activity towards p-nitrophenyl sulfate and 4-methylumbelliferyl sulfate. Catalyzes the hydrolysis of the 3-sulfate groups of the N-sulfo-D-glucosamine 3-O-sulfate units of heparin. This is Arylsulfatase G (ARSG) from Homo sapiens (Human).